The chain runs to 152 residues: Protein ripply3 (152 aa).

Residues 1–24 (MRPEAAGVREARGRLCHCPGDDPG) show a composition bias toward basic and acidic residues. Disordered regions lie at residues 1-76 (MRPE…GAFG) and 113-152 (FYND…ERAE). Positions 40–43 (WRPW) match the WRPW motif motif. Positions 79-114 (HPVRLYLPVSKRQEYLQSSGEKVLASFPVQATIHFY) are ripply homology domain. The span at 116–130 (DDSESGSEEEQEEEA) shows a compositional bias: acidic residues. Positions 140–152 (AEVRDSAQEERAE) are enriched in basic and acidic residues.

It belongs to the ripply family. As to quaternary structure, interacts with TBX1.

Its subcellular location is the nucleus. In terms of biological role, acts as a transcriptional corepressor. Negative regulator of the transcriptional activity of TBX1. Plays a role in the development of the pharyngeal apparatus and derivatives. In Mus musculus (Mouse), this protein is Protein ripply3 (Ripply3).